The sequence spans 418 residues: AP-1 complex subunit mu (418 aa).

Positions 176–417 (NNEAYFDVTE…VTKAGKFQVR (242 aa)) constitute an MHD domain.

It belongs to the adaptor complexes medium subunit family. In terms of assembly, adaptor protein complex 1 (AP-1) is a heterotetramer composed of two large adaptins (gamma- and beta'-type subunits), a medium adaptin (mu-type subunit AP47) and a small adaptin (sigma-type subunit AP19). Post-translationally, regulated by phosphorylation.

Its subcellular location is the golgi apparatus. It is found in the cytoplasmic vesicle. The protein resides in the clathrin-coated vesicle membrane. In terms of biological role, component of the adapter complexes which link clathrin to receptors in coated vesicles. Clathrin-associated protein complexes are believed to interact with the cytoplasmic tails of membrane proteins, leading to their selection and concentration. AP47 is a subunit of the plasma membrane adapter. The protein is AP-1 complex subunit mu of Diplobatis ommata (Ocellated electric ray).